Here is a 597-residue protein sequence, read N- to C-terminus: Aspartate--tRNA ligase (597 aa).

E180 is an L-aspartate binding site. Positions 204–207 (QLFK) are aspartate. Residue R226 participates in L-aspartate binding. Residues 226–228 (RDE) and Q235 each bind ATP. H454 is a binding site for L-aspartate. E488 is an ATP binding site. Position 495 (R495) interacts with L-aspartate. 540–543 (GLDR) contacts ATP.

The protein belongs to the class-II aminoacyl-tRNA synthetase family. Type 1 subfamily. Homodimer.

It is found in the cytoplasm. The catalysed reaction is tRNA(Asp) + L-aspartate + ATP = L-aspartyl-tRNA(Asp) + AMP + diphosphate. Functionally, catalyzes the attachment of L-aspartate to tRNA(Asp) in a two-step reaction: L-aspartate is first activated by ATP to form Asp-AMP and then transferred to the acceptor end of tRNA(Asp). This chain is Aspartate--tRNA ligase, found in Clostridium perfringens (strain ATCC 13124 / DSM 756 / JCM 1290 / NCIMB 6125 / NCTC 8237 / Type A).